The sequence spans 137 residues: Allergen Ste b 1 (137 aa).

The first 18 residues, 1 to 18 (ALFAAAGLAAAAPFETRQ), serve as a signal peptide directing secretion. The region spanning 28-137 (QGDYVWKISE…PKDVICQGAS (110 aa)) is the AA1-like domain. 2 disulfides stabilise this stretch: Cys67-Cys82 and Cys121-Cys133.

It belongs to the ALTA1 family. As to quaternary structure, homodimer; disulfide-linked.

It is found in the secreted. The sequence is that of Allergen Ste b 1 (alta1) from Stemphylium botryosum (Black stalk rot fungus).